We begin with the raw amino-acid sequence, 603 residues long: MEASKCFGPRTLPIIHNVPLCLKTNFSLFPCRLLQSQSLSSKKSTKHYLFRVKAETSGDLESTRPLTYFSPSYWGDHFLSVSIDDSEFEALEKEIETVFKPKVRDMLMSPHSSDKERIRLIHLLISLGIAYYYENEIEEILHKAYGKLACLISDEDDLETIAIMFEVFRLYGHKMPCDVFERFKSEDGKFKESLVGDVRGLLQLYEAAHLGAPSEDIMDEALSFARYHLEPLAGTETSSNLFKHVENVLYRARYHSIEILVARQYISFYDQEEDQDETLLRFSKLNFNFCQMHYVKELKIVTRWWKELGIASKLPYSIRERNVETYLGGLGVLFEPRYSLARIFLAKLTLIMTVVDDTCDAYATLPEVQSLHDAFHRWDLRAMEELPRYMRIIYQSVFETVEDIDREMIARGKHGRLQLTIDEIKSLMIWYLGIAKWARSDQVPSFEDYMEIGTPSSALDDFASYGFIAMDDCDQKQLKEWFYSKPKIFHALNALFRIRNDIVTFEQEMSRGEVANGVNCYMKQHGVTKEAAVEELRKMERESYKIMIEEFMTSKAMPRQILVRPVNIARVMDLFYKEADGFGHPDQKLLQLIASLFLHPIPL.

Positions 356, 360, 500, 504, and 508 each coordinate Mg(2+). The short motif at 356–360 is the DDXXD motif element; it reads DDTCD.

Belongs to the terpene synthase family. Tpsa subfamily. It depends on Mg(2+) as a cofactor. Requires Mn(2+) as cofactor. In terms of tissue distribution, predominantly expressed in roots but also in flowers.

It is found in the cytoplasm. The protein operates within secondary metabolite biosynthesis; terpenoid biosynthesis. Involved in terpene biosynthesis in roots. Possesses sesquiterpene (C15) synthase activity in vitro. Does not seem to be involved in diterpene (C20) biosynthesis. The chain is Terpenoid synthase 25 from Arabidopsis thaliana (Mouse-ear cress).